Reading from the N-terminus, the 522-residue chain is Light-independent protochlorophyllide reductase subunit B (522 aa).

D36 provides a ligand contact to [4Fe-4S] cluster. Residue D290 is the Proton donor of the active site. 425–426 provides a ligand contact to substrate; sequence GL.

This sequence belongs to the ChlB/BchB/BchZ family. In terms of assembly, protochlorophyllide reductase is composed of three subunits; ChlL, ChlN and ChlB. Forms a heterotetramer of two ChlB and two ChlN subunits. [4Fe-4S] cluster serves as cofactor.

It catalyses the reaction chlorophyllide a + oxidized 2[4Fe-4S]-[ferredoxin] + 2 ADP + 2 phosphate = protochlorophyllide a + reduced 2[4Fe-4S]-[ferredoxin] + 2 ATP + 2 H2O. It functions in the pathway porphyrin-containing compound metabolism; chlorophyll biosynthesis (light-independent). Its function is as follows. Component of the dark-operative protochlorophyllide reductase (DPOR) that uses Mg-ATP and reduced ferredoxin to reduce ring D of protochlorophyllide (Pchlide) to form chlorophyllide a (Chlide). This reaction is light-independent. The NB-protein (ChlN-ChlB) is the catalytic component of the complex. In Synechococcus sp. (strain CC9311), this protein is Light-independent protochlorophyllide reductase subunit B.